Reading from the N-terminus, the 235-residue chain is Small ribosomal subunit protein uS3 (235 aa).

Residues 39-107 (IRDFIKKECH…ELHLNIVEVR (69 aa)) enclose the KH type-2 domain. Residues 213 to 235 (AARDRKAQELQDGPAPRGAGGRR) form a disordered region.

Belongs to the universal ribosomal protein uS3 family. As to quaternary structure, part of the 30S ribosomal subunit. Forms a tight complex with proteins S10 and S14.

In terms of biological role, binds the lower part of the 30S subunit head. Binds mRNA in the 70S ribosome, positioning it for translation. In Roseobacter denitrificans (strain ATCC 33942 / OCh 114) (Erythrobacter sp. (strain OCh 114)), this protein is Small ribosomal subunit protein uS3.